The following is a 412-amino-acid chain: Shaggy-related protein kinase zeta (412 aa).

Positions 1-19 are enriched in pro residues; sequence MTSIPLGPPQPPSLAPQPP. The segment at 1–33 is disordered; it reads MTSIPLGPPQPPSLAPQPPHLHGGDSLKRRPDI. The span at 22 to 33 shows a compositional bias: basic and acidic residues; the sequence is HGGDSLKRRPDI. Ser-26 bears the Phosphoserine mark. The Protein kinase domain maps to 72–356; the sequence is YMAERVVGTG…ALEACAHPFF (285 aa). ATP contacts are provided by residues 78-86 and Lys-101; that span reads VGTGSFGIV. At Ser-127 the chain carries Phosphoserine. A phosphothreonine mark is found at Thr-136 and Thr-137. The active-site Proton acceptor is the Asp-197. Residue Ser-219 is modified to Phosphoserine. The residue at position 232 (Tyr-232) is a Phosphotyrosine. A Phosphoserine modification is found at Ser-252. At Thr-293 the chain carries Phosphothreonine. A Phosphoserine modification is found at Ser-342. The residue at position 346 (Thr-346) is a Phosphothreonine.

It belongs to the protein kinase superfamily. CMGC Ser/Thr protein kinase family. GSK-3 subfamily. Binds to KIB1. Interacts with beet curly top virus AL4/C4 and tomato golden mosaic virus AL4/AC4. Autophosphorylated mainly on threonine and serine residues.

The enzyme catalyses L-seryl-[protein] + ATP = O-phospho-L-seryl-[protein] + ADP + H(+). It catalyses the reaction L-threonyl-[protein] + ATP = O-phospho-L-threonyl-[protein] + ADP + H(+). In terms of biological role, may mediate extracellular signals to regulate transcription in differentiating cells. In Arabidopsis thaliana (Mouse-ear cress), this protein is Shaggy-related protein kinase zeta (ASK6).